The following is a 110-amino-acid chain: Small ribosomal subunit protein uS10 (110 aa).

Belongs to the universal ribosomal protein uS10 family. In terms of assembly, part of the 30S ribosomal subunit.

In terms of biological role, involved in the binding of tRNA to the ribosomes. This is Small ribosomal subunit protein uS10 from Ehrlichia ruminantium (strain Gardel).